A 498-amino-acid chain; its full sequence is Lysine--tRNA ligase (498 aa).

Positions 409 and 416 each coordinate Mg(2+).

It belongs to the class-II aminoacyl-tRNA synthetase family. As to quaternary structure, homodimer. The cofactor is Mg(2+).

It localises to the cytoplasm. It carries out the reaction tRNA(Lys) + L-lysine + ATP = L-lysyl-tRNA(Lys) + AMP + diphosphate. The protein is Lysine--tRNA ligase of Coxiella burnetii (strain CbuK_Q154) (Coxiella burnetii (strain Q154)).